Here is a 113-residue protein sequence, read N- to C-terminus: AFKGILSNADIKAAEAACFKEGSFDEDGFYAKVGLDAFSADELKKLFKIADEDKEGFIEEDELKLFLIAFAADLRALTDAETKAFLKAGDSDGDGKIGVDEFGALVDKWGAKG.

An N-acetylalanine modification is found at A1. The S-linked (Glc) cysteine glycan is linked to C18. 2 consecutive EF-hand domains span residues F38–D73 and L77–K112. Ca(2+) is bound by residues D51, D53, E55, F57, E59, E62, D90, D92, D94, K96, and E101.

Belongs to the parvalbumin family. In terms of tissue distribution, muscle (at protein level).

In terms of biological role, in muscle, parvalbumin is thought to be involved in relaxation after contraction. It binds two calcium ions. This is Parvalbumin beta from Gadus morhua subsp. callarias (Baltic cod).